The following is a 697-amino-acid chain: Tryptophan synthase (697 aa).

Residues 1–298 form a tryptophan synthase alpha chain region; sequence MTEQIKKTFL…AVVEPINEMY (298 aa). Residues Glu-50 and Asp-61 each act as proton acceptor in the active site. The tryptophan synthase beta chain stretch occupies residues 298 to 697; that stretch reads YLPQKYGMFG…GPKIGWDLRF (400 aa). Lys-381 is modified (N6-(pyridoxal phosphate)lysine).

In the N-terminal section; belongs to the TrpA family. This sequence in the C-terminal section; belongs to the TrpB family. Pyridoxal 5'-phosphate is required as a cofactor.

It carries out the reaction (1S,2R)-1-C-(indol-3-yl)glycerol 3-phosphate + L-serine = D-glyceraldehyde 3-phosphate + L-tryptophan + H2O. The protein operates within amino-acid biosynthesis; L-tryptophan biosynthesis; L-tryptophan from chorismate: step 5/5. In Schizosaccharomyces pombe (strain 972 / ATCC 24843) (Fission yeast), this protein is Tryptophan synthase (trp2).